The following is a 327-amino-acid chain: UPF0285 protein Maeo_0978 (327 aa).

This sequence belongs to the UPF0285 family.

This chain is UPF0285 protein Maeo_0978, found in Methanococcus aeolicus (strain ATCC BAA-1280 / DSM 17508 / OCM 812 / Nankai-3).